Reading from the N-terminus, the 1059-residue chain is Cellulose synthase catalytic subunit A [UDP-forming] (1059 aa).

2 disordered regions span residues 1–159 and 174–220; these read MDRN…RFDT and MRQH…KHVA. Residues 15-36 show a composition bias toward low complexity; sequence NNINSSGGSYNNSMNNSSNNIG. 2 stretches are compositionally biased toward polar residues: residues 40 to 57 and 142 to 154; these read GNNQ…QSNL and NSPS…TSGG. The segment covering 181–194 has biased composition (low complexity); it reads QEQQQQQQQQQQQQ. A compositionally biased stretch (basic residues) spans 204 to 219; the sequence is QKKKPSSMQLSKKKHV. Transmembrane regions (helical) follow at residues 246–266, 280–300, and 306–323; these read FSHA…IFYF, ITFS…LGSA, and FTNP…QILA. Positions 328-628 are catalytic subdomain A; sequence KHPTVMMYVC…FLGLLDADQQ (301 aa). Residue aspartate 370 is part of the active site. 2 residues coordinate substrate: aspartate 624 and aspartate 626. Residues 701 to 761 form a catalytic subdomain B region; sequence QPLYDIGGIM…EQRKRWAQGA (61 aa). Aspartate 717 is an active-site residue. Helical transmembrane passes span 790–810 and 813–833; these read IYPF…IMSI and VPIV…PVMV. Residues 933–953 form a disordered region; it reads DNAQESSGKHKAEQSFRTSNK. A compositionally biased stretch (basic and acidic residues) spans 939 to 953; the sequence is SGKHKAEQSFRTSNK. The next 3 membrane-spanning stretches (helical) occupy residues 963-983, 993-1013, and 1035-1055; these read LFLP…SAVL, WLLV…WSFI, and IVLF…KVCI.

It belongs to the glycosyltransferase 2 family. Requires Mg(2+) as cofactor.

The protein localises to the membrane. The enzyme catalyses [(1-&gt;4)-beta-D-glucosyl](n) + UDP-alpha-D-glucose = [(1-&gt;4)-beta-D-glucosyl](n+1) + UDP + H(+). It functions in the pathway glycan metabolism; amoeba cellulose biosynthesis. Functionally, catalytic subunit of cellulose synthase. It incorporates glucose from uridine 5'-diphosphate glucose (UDP-alpha-D-glucose) to cellulose (a (1-&gt;4)-beta-D-glucan), which is produced as an extracellular component for mechanical and chemical protection at the onset of the stalk formation, when the cells exhibit multicellular behavior during culmination. This is Cellulose synthase catalytic subunit A [UDP-forming] (dcsA) from Dictyostelium discoideum (Social amoeba).